Consider the following 200-residue polypeptide: Large ribosomal subunit protein uL4 (200 aa).

The tract at residues 38 to 72 (GRQGTKQQKTRSDVAGGGKRPWRQKGTGRARAGTT) is disordered.

Belongs to the universal ribosomal protein uL4 family. Part of the 50S ribosomal subunit.

One of the primary rRNA binding proteins, this protein initially binds near the 5'-end of the 23S rRNA. It is important during the early stages of 50S assembly. It makes multiple contacts with different domains of the 23S rRNA in the assembled 50S subunit and ribosome. Its function is as follows. Forms part of the polypeptide exit tunnel. This Pseudomonas putida (strain ATCC 700007 / DSM 6899 / JCM 31910 / BCRC 17059 / LMG 24140 / F1) protein is Large ribosomal subunit protein uL4.